A 444-amino-acid chain; its full sequence is Argininosuccinate synthase (444 aa).

Residues 17-25 and A43 each bind ATP; that span reads AFSGGLDTS. Residue Y99 participates in L-citrulline binding. 2 residues coordinate ATP: G129 and T131. The L-aspartate site is built by T131, N135, and D136. L-citrulline is bound at residue N135. D136 is a binding site for ATP. The L-citrulline site is built by R139 and S192. D194 contributes to the ATP binding site. The L-citrulline site is built by T201, E203, and E280.

The protein belongs to the argininosuccinate synthase family. Type 2 subfamily. Homotetramer.

The protein localises to the cytoplasm. The catalysed reaction is L-citrulline + L-aspartate + ATP = 2-(N(omega)-L-arginino)succinate + AMP + diphosphate + H(+). It participates in amino-acid biosynthesis; L-arginine biosynthesis; L-arginine from L-ornithine and carbamoyl phosphate: step 2/3. The chain is Argininosuccinate synthase from Delftia acidovorans (strain DSM 14801 / SPH-1).